Reading from the N-terminus, the 410-residue chain is Interleukin-1 receptor type 2 (410 aa).

The first 13 residues, Met1 to Ala13, serve as a signal peptide directing secretion. Residues Phe14 to Glu355 are Extracellular-facing. 3 Ig-like C2-type domains span residues Pro35–Lys136, Pro146–Glu237, and Pro249–Ser357. 3 disulfide bridges follow: Cys42/Cys128, Cys64/Cys120, and Cys164/Cys219. Residues Asn124, Asn208, Asn231, and Asn289 are each glycosylated (N-linked (GlcNAc...) asparagine). The cysteines at positions 270 and 338 are disulfide-linked. The chain crosses the membrane as a helical span at residues Val356–Met381. Residues Arg382 to Asn410 are Cytoplasmic-facing.

Belongs to the interleukin-1 receptor family. As to quaternary structure, associates with IL1RAP to form a non-signaling interleukin-1 receptor complex. In terms of processing, a soluble form (sIL1R2) can also be produced by proteolytic cleavage at the cell surface (shedding) involving a metalloproteinase. Strongly expressed in B-cells, with levels 21 times higher than IL1R1. In T-cells expressed 5 times more compared with IL1R1.

It localises to the membrane. It is found in the cell membrane. The protein localises to the secreted. Functionally, non-signaling receptor for IL1A, IL1B and IL1RN. Reduces IL1B activities. Serves as a decoy receptor by competitive binding to IL1B and preventing its binding to IL1R1. Also modulates cellular response through non-signaling association with IL1RAP after binding to IL1B. IL1R2 (membrane and secreted forms) preferentially binds IL1B and poorly IL1A and IL1RN. The secreted IL1R2 recruits secreted IL1RAP with high affinity; this complex formation may be the dominant mechanism for neutralization of IL1B by secreted/soluble receptors. This Mus musculus (Mouse) protein is Interleukin-1 receptor type 2 (Il1r2).